A 443-amino-acid polypeptide reads, in one-letter code: MEEDIDTRKINNSFLRDHSYATEADIISTVEFNHTGELLATGDKGGRVVIFQREQESKNQVHRRGEYNVYSTFQSHEPEFDYLKSLEIEEKINKIRWLPQQNAAYFLLSTNDKTVKLWKVSERDKRPEGYNLKDEEGRLRDPATITTLRVPVLRPMDLMVEATPRRVFANAHTYHINSISVNSDYETYMSADDLRINLWNFEITNQSFNIVDIKPANMEELTEVITAAEFHPHHCNTFVYSSSKGTIRLCDMRASALCDRHTKFFEEPEDPSNRSFFSEIISSISDVKFSHSGRYIMTRDYLTAKVWDLNMENRPVETYQVHDYLRSKLCSLYENDCIFDKFECVWNGSDSVIMTGSYNNFFRMFDRNTKRDVTLEASRENSKPRAILKPRKVCVGGKRRKDEISVDSLDFSKKILHTAWHPSENIIAVAATNNLYIFQDKVN.

WD repeat units follow at residues 22 to 61 (TEAD…KNQV), 87 to 128 (EIEE…KRPE), 171 to 209 (AHTY…QSFN), and 220 to 260 (ELTE…LCDR). S275 carries the phosphoserine modification. WD repeat units follow at residues 279–317 (EIIS…RPVE), 334–375 (ENDC…DVTL), and 410–442 (DFSK…QDKV). Y295 is subject to Phosphotyrosine. The residue at position 298 (T298) is a Phosphothreonine.

The protein belongs to the phosphatase 2A regulatory subunit B family. PP2A consists of a common heterodimeric core enzyme, composed of a 36 kDa catalytic subunit (subunit C) and a 65 kDa constant regulatory subunit (PR65 or subunit A), that associates with a variety of regulatory subunits. Proteins that associate with the core dimer include three families of regulatory subunits B (the R2/B/PR55/B55, R3/B''/PR72/PR130/PR59 and R5/B'/B56 families), the 48 kDa variable regulatory subunit, viral proteins, and cell signaling molecules. Interacts with IER5 (via N- and C-terminal regions). Interacts with TOMM22. In terms of tissue distribution, expressed in the brain. Isoform 1 and isoform 2 are expressed in the forbrain. Isoform 1 is more strongly expressed than isoform 2 in the olfactory bulb. Isoform 1 and isoform 2 are weakly expressed in the cerebellum. Isoform 1 is expressed in the testis. Isoform 2 expression is undetectable at birth rising to adult level at day 14.

It is found in the cytoplasm. It localises to the cytoskeleton. Its subcellular location is the membrane. The protein resides in the mitochondrion. The protein localises to the mitochondrion outer membrane. Functionally, the B regulatory subunit might modulate substrate selectivity and catalytic activity, and might also direct the localization of the catalytic enzyme to a particular subcellular compartment. Within the PP2A holoenzyme complex, isoform 2 is required to promote proapoptotic activity. Isoform 2 regulates neuronal survival through the mitochondrial fission and fusion balance. The polypeptide is Serine/threonine-protein phosphatase 2A 55 kDa regulatory subunit B beta isoform (Ppp2r2b) (Rattus norvegicus (Rat)).